Here is an 878-residue protein sequence, read N- to C-terminus: uncharacterized protein (878 aa).

4 disordered regions span residues I58 to F223, K306 to R494, K585 to L652, and P679 to G709. 3 stretches are compositionally biased toward low complexity: residues N64 to S213, S314 to S325, and I335 to N355. Residues R362–V372 show a composition bias toward polar residues. The span at N373 to R494 shows a compositional bias: low complexity. Over residues K585–Q595 the composition is skewed to basic and acidic residues. Residues K596–Q605 show a composition bias toward low complexity. Residues T615 to E624 show a composition bias toward acidic residues. Low complexity-rich tracts occupy residues N639–L652 and P679–S704.

This is an uncharacterized protein from Dictyostelium discoideum (Social amoeba).